The following is a 503-amino-acid chain: Glutamate/gamma-aminobutyrate antiporter (503 aa).

33–43 (LHLVFFLLLGG) lines the L-glutamate pocket. Helical transmembrane passes span 35–55 (LVFF…LCAA), 153–173 (FVVG…AYFI), 194–214 (VSTL…EASA), 232–252 (ILLV…VAAV), 366–386 (LTVV…FVLI), 407–427 (IIAG…FVPP), and 440–460 (MILL…YELH).

The protein belongs to the amino acid-polyamine-organocation (APC) superfamily. Glutamate:GABA antiporter (GGA) (TC 2.A.3.7) family.

The protein resides in the cell membrane. The catalysed reaction is 4-aminobutanoate(in) + L-glutamate(out) = 4-aminobutanoate(out) + L-glutamate(in). In terms of biological role, involved in glutaminase-dependent acid resistance. Exchanges extracellular glutamate (Glu) for intracellular gamma-aminobutyric acid (GABA) under acidic conditions. This Lactococcus lactis subsp. cremoris (strain MG1363) protein is Glutamate/gamma-aminobutyrate antiporter.